The sequence spans 358 residues: Alanine racemase (358 aa).

K35 serves as the catalytic Proton acceptor; specific for D-alanine. At K35 the chain carries N6-(pyridoxal phosphate)lysine. Residue R130 coordinates substrate. Catalysis depends on Y255, which acts as the Proton acceptor; specific for L-alanine. Residue M303 participates in substrate binding.

It belongs to the alanine racemase family. Pyridoxal 5'-phosphate is required as a cofactor.

The enzyme catalyses L-alanine = D-alanine. It participates in amino-acid biosynthesis; D-alanine biosynthesis; D-alanine from L-alanine: step 1/1. Its function is as follows. Catalyzes the interconversion of L-alanine and D-alanine. May also act on other amino acids. The sequence is that of Alanine racemase (alr) from Shewanella oneidensis (strain ATCC 700550 / JCM 31522 / CIP 106686 / LMG 19005 / NCIMB 14063 / MR-1).